Consider the following 156-residue polypeptide: Small ribosomal subunit protein uS7 (156 aa).

This sequence belongs to the universal ribosomal protein uS7 family. In terms of assembly, part of the 30S ribosomal subunit. Contacts proteins S9 and S11.

In terms of biological role, one of the primary rRNA binding proteins, it binds directly to 16S rRNA where it nucleates assembly of the head domain of the 30S subunit. Is located at the subunit interface close to the decoding center, probably blocks exit of the E-site tRNA. The chain is Small ribosomal subunit protein uS7 from Shewanella baltica (strain OS223).